We begin with the raw amino-acid sequence, 517 residues long: Cytochrome P450 monooxygenase ausI (517 aa).

Residues 8–28 traverse the membrane as a helical segment; the sequence is LAPLGQPWIAGLVVVSAVLYL. Residue Cys-457 participates in heme binding.

This sequence belongs to the cytochrome P450 family. Heme serves as cofactor.

It is found in the membrane. It participates in secondary metabolite biosynthesis; terpenoid biosynthesis. Its function is as follows. Cytochrome P450 monooxygenase; part of the gene cluster that mediates the biosynthesis of calidodehydroaustin, a fungal meroterpenoid. The first step of the pathway is the synthesis of 3,5-dimethylorsellinic acid by the polyketide synthase ausA. 3,5-dimethylorsellinic acid is then prenylated by the polyprenyl transferase ausN. Further epoxidation by the FAD-dependent monooxygenase ausM and cyclization by the probable terpene cyclase ausL lead to the formation of protoaustinoid A. Protoaustinoid A is then oxidized to spiro-lactone preaustinoid A3 by the combined action of the FAD-binding monooxygenases ausB and ausC, and the dioxygenase ausE. Acid-catalyzed keto-rearrangement and ring contraction of the tetraketide portion of preaustinoid A3 by ausJ lead to the formation of preaustinoid A4. The aldo-keto reductase ausK, with the help of ausH, is involved in the next step by transforming preaustinoid A4 into isoaustinone which is in turn hydroxylated by the P450 monooxygenase ausI to form austinolide. The cytochrome P450 monooxygenase ausG modifies austinolide to austinol. Austinol is further acetylated to austin by the O-acetyltransferase ausP, which spontaneously changes to dehydroaustin. The cytochrome P450 monooxygenase ausR then converts dehydroaustin is into 7-dehydrodehydroaustin. The hydroxylation catalyzed by ausR permits the O-acetyltransferase ausQ to add an additional acetyl group to the molecule, leading to the formation of acetoxydehydroaustin. The short chain dehydrogenase ausT catalyzes the reduction of the double bond present between carbon atoms 1 and 2 to convert 7-dehydrodehydroaustin into 1,2-dihydro-7-hydroxydehydroaustin. AusQ catalyzes not only an acetylation reaction but also the addition of the PKS ausV diketide product to 1,2-dihydro-7-hydroxydehydroaustin, forming precalidodehydroaustin. Finally, the iron/alpha-ketoglutarate-dependent dioxygenase converts precalidodehydroaustin into calidodehydroaustin. This chain is Cytochrome P450 monooxygenase ausI, found in Aspergillus calidoustus.